A 164-amino-acid chain; its full sequence is Dehydrin Rab16C (164 aa).

Residues 42–51 show a composition bias toward gly residues; it reads MGGHHAGAGG. Residues 42-164 form a disordered region; it reads MGGHHAGAGG…KIKEKLPGQH (123 aa). A compositionally biased stretch (low complexity) spans 105 to 115; sequence GNNQQQQQMMG. Residues 128–138 show a composition bias toward gly residues; sequence GMTGAGTGTGV. The segment covering 147 to 164 has biased composition (basic and acidic residues); it reads GEKKGFMDKIKEKLPGQH.

The protein belongs to the plant dehydrin family.

This is Dehydrin Rab16C (RAB16C) from Oryza sativa subsp. japonica (Rice).